The chain runs to 281 residues: Urease accessory protein UreD 2 (281 aa).

The protein belongs to the UreD family. UreD, UreF and UreG form a complex that acts as a GTP-hydrolysis-dependent molecular chaperone, activating the urease apoprotein by helping to assemble the nickel containing metallocenter of UreC. The UreE protein probably delivers the nickel.

The protein resides in the cytoplasm. Functionally, required for maturation of urease via the functional incorporation of the urease nickel metallocenter. The protein is Urease accessory protein UreD 2 of Pseudomonas syringae pv. syringae (strain B728a).